Here is a 287-residue protein sequence, read N- to C-terminus: Octanoyl-[GcvH]:protein N-octanoyltransferase (287 aa).

The BPL/LPL catalytic domain occupies 45-253; that stretch reads GESPATARSW…ELKELSGRLY (209 aa). Cysteine 150 serves as the catalytic Acyl-thioester intermediate.

This sequence belongs to the octanoyltransferase LipL family.

The enzyme catalyses N(6)-octanoyl-L-lysyl-[glycine-cleavage complex H protein] + L-lysyl-[lipoyl-carrier protein] = N(6)-octanoyl-L-lysyl-[lipoyl-carrier protein] + L-lysyl-[glycine-cleavage complex H protein]. It functions in the pathway protein modification; protein lipoylation via endogenous pathway; protein N(6)-(lipoyl)lysine from octanoyl-[acyl-carrier-protein]. Its function is as follows. Catalyzes the amidotransfer (transamidation) of the octanoyl moiety from octanoyl-GcvH to the lipoyl domain of the E2 subunit of lipoate-dependent enzymes. In Bacillus velezensis (strain DSM 23117 / BGSC 10A6 / LMG 26770 / FZB42) (Bacillus amyloliquefaciens subsp. plantarum), this protein is Octanoyl-[GcvH]:protein N-octanoyltransferase.